A 153-amino-acid chain; its full sequence is Ribosome maturation factor RimP (153 aa).

This sequence belongs to the RimP family.

It localises to the cytoplasm. Its function is as follows. Required for maturation of 30S ribosomal subunits. The polypeptide is Ribosome maturation factor RimP (Clostridium botulinum (strain Okra / Type B1)).